A 246-amino-acid chain; its full sequence is Polyhedrin (246 aa).

It belongs to the polyhedrin family.

In terms of biological role, major component of the virus occlusion bodies, which are large proteinaceous structures (polyhedra), that protect the virus from the outside environment for extended periods until they are ingested by insect larvae. In Lepidoptera (butterflies and moths), this protein is Polyhedrin (PH).